The primary structure comprises 391 residues: 1-deoxy-D-xylulose 5-phosphate reductoisomerase (391 aa).

6 residues coordinate NADPH: Thr-10, Gly-11, Ser-12, Ile-13, Asn-38, and Asn-122. Lys-123 serves as a coordination point for 1-deoxy-D-xylulose 5-phosphate. Residue Glu-124 coordinates NADPH. Asp-148 contributes to the Mn(2+) binding site. Residues Ser-149, Glu-150, Ser-173, and His-196 each coordinate 1-deoxy-D-xylulose 5-phosphate. Residue Glu-150 participates in Mn(2+) binding. Residue Gly-202 participates in NADPH binding. 1-deoxy-D-xylulose 5-phosphate contacts are provided by Ser-209, Asn-214, Lys-215, and Glu-218. Glu-218 provides a ligand contact to Mn(2+).

This sequence belongs to the DXR family. The cofactor is Mg(2+). Mn(2+) is required as a cofactor.

It catalyses the reaction 2-C-methyl-D-erythritol 4-phosphate + NADP(+) = 1-deoxy-D-xylulose 5-phosphate + NADPH + H(+). The protein operates within isoprenoid biosynthesis; isopentenyl diphosphate biosynthesis via DXP pathway; isopentenyl diphosphate from 1-deoxy-D-xylulose 5-phosphate: step 1/6. Its function is as follows. Catalyzes the NADPH-dependent rearrangement and reduction of 1-deoxy-D-xylulose-5-phosphate (DXP) to 2-C-methyl-D-erythritol 4-phosphate (MEP). The sequence is that of 1-deoxy-D-xylulose 5-phosphate reductoisomerase from Wolbachia pipientis subsp. Culex pipiens (strain wPip).